The following is a 643-amino-acid chain: Galactan 5-O-arabinofuranosyltransferase (643 aa).

The next 13 membrane-spanning stretches (helical) occupy residues 25-45 (VLVALGQLAAAVVVAVGVAVV), 66-86 (ALTTVGQVGCLAGLVGIGWLW), 97-117 (LGGLVLVSAFTVVTLGMPLGA), 180-200 (FKPWAITSMAIAVAVALVLWW), 205-225 (FEYALLVTVATAAVMLAYSSP), 229-249 (AAMITVLLPPMLVLTWSGLGA), 255-272 (WAAVVGAGVFLGFAATWY), 276-293 (VAYGAFTVVLMALLLAGS), 309-329 (LAVVGAIAAAIGSTTWLPYLL), 355-375 (FPMLQFSLLGAICLLGTLWLV), 384-404 (AGALAIGVLAVYLWSLLSMLA), 420-440 (LSVLLVAAGAFGFVEAVQALG), and 445-465 (GVIPMAAAIGLAGAIAFSQDI). Residues 466-643 (PDVLRPDLTI…LAIRKPQESA (178 aa)) lie on the Extracellular side of the membrane.

This sequence belongs to the glycosyltransferase 85 family.

The protein resides in the cell membrane. The catalysed reaction is Adds an alpha-D-arabinofuranosyl group from trans,octacis-decaprenylphospho-beta-D-arabinofuranose at the 5-O-position of the eighth, tenth and twelfth galactofuranose unit of the galactofuranan chain of [beta-D-galactofuranosyl-(1-&gt;5)-beta-D-galactofuranosyl-(1-&gt;6)]14-beta-D-galactofuranosyl-(1-&gt;5)-beta-D-galactofuranosyl-(1-&gt;4)-alpha-L-rhamnopyranosyl-(1-&gt;3)-N-acetyl-alpha-D-glucosaminyl-diphospho-trans,octacis-decaprenol.. The protein operates within cell wall biogenesis; cell wall polysaccharide biosynthesis. Functionally, involved in the biosynthesis of the arabinogalactan (AG) region of the mycolylarabinogalactan-peptidoglycan (mAGP) complex, an essential component of the mycobacterial cell wall. Catalyzes the addition of the first key arabinofuranosyl (Araf) residue from the sugar donor decaprenyl-phospho-arabinose (DPA) on the C-5 of a 6-linked galactofuranosyl (Galf) of the galactan domain, thus 'priming' the galactan for further elaboration by other arabinofuranosyltransferases. It is not able to add an Araf residue to a terminal Galf. The chain is Galactan 5-O-arabinofuranosyltransferase from Mycobacterium tuberculosis (strain CDC 1551 / Oshkosh).